The sequence spans 796 residues: MAWDMCSQDSVWSDIECAALVGEDQPLCPDLPELDLSELDVNDLDTDSFLGGLKWCSDQSEIISNQYNNEPANIFEKIDEENEANLLAVLTETLDSLPVDEDGLPSFDALTDGDVTTDNEASPSSMPDGTPPPQEAEEPSLLKKLLLAPANTQLSYNECSGLSTQNHANHTHRIRTNPAIVKTENSWSNKAKSICQQQKPQRRPCSELLKYLTTNDDPPHTKPTENRNSSRDKCASKKKSHTQPQSQHAQAKPTTLSLPLTPESPNDPKGSPFENKTIERTLSVELSGTAGLTPPTTPPHKANQDNPFKASPKLKPSCKTVVPPPTKRARYSECSGTQGSHSTKKGPEQSELYAQLSKSSVLSRGHEERKTKRPSLRLFGDHDYCQSVNSKTDILINISQELQDSRQLDFKDASCDWQGHICSSTDSSQCYLRETLEASKQVSPCSTRKQLQDQEIRAELNKHFGHPSQAVFDDKVDKTSELRDGNFSNEQFSKLPVFINSGLAMDGLFDDSEDENDKLSYPWDGTQSYSLFDVSPSCSSFNSPCRDSVSPPKSLFSQRPQRMRSRSRSFSRHRSCSRSPYSRSRSRSPGSRSSSRSCYYYESSHYRHRTHRNSPLYVRSRSRSPYSRRPRYDSYEANEHERLKRDEYRREYEKRESERAKQRERQKQKAIEERRVIYVGKIRPDTTRTELRDRFEVFGEIEECTVNLRDDGDSYGFITYRYTCDAFAALENGYTLRRSNETDFELYFCGRKQFFKSNYADLDSNSDDFDPASTKSKYDSLDFDSLLKEAQRSLRR.

N6-acetyllysine is present on lysine 77. Residues 98-138 (PVDEDGLPSFDALTDGDVTTDNEASPSSMPDGTPPPQEAEE) are disordered. Positions 114–127 (DVTTDNEASPSSMP) are enriched in polar residues. Positions 142–146 (LKKLL) match the LXXLL motif motif. N6-acetyllysine is present on lysine 144. Phosphothreonine; by AMPK is present on threonine 176. The residue at position 182 (lysine 182) is an N6-acetyllysine. The segment at 211–275 (YLTTNDDPPH…NDPKGSPFEN (65 aa)) is disordered. Residues 217–235 (DPPHTKPTENRNSSRDKCA) are compositionally biased toward basic and acidic residues. Positions 242-258 (TQPQSQHAQAKPTTLSL) are enriched in polar residues. Lysine 252, lysine 269, lysine 276, lysine 319, lysine 345, lysine 411, lysine 440, and lysine 449 each carry N6-acetyllysine. Positions 288–350 (GTAGLTPPTT…HSTKKGPEQS (63 aa)) are disordered. The interval 291-337 (GLTPPTTPPHKANQDNPFKASPKLKPSCKTVVPPPTKRARYSECSGT) is interaction with PPARG. Residues 348 to 796 (EQSELYAQLS…LKEAQRSLRR (449 aa)) are mediates interaction with RNF34. At serine 537 the chain carries Phosphoserine; by AMPK. 2 disordered regions span residues 541-597 (FNSP…SSRS) and 611-669 (HRNS…QKQK). Over residues 561–576 (QRMRSRSRSFSRHRSC) the composition is skewed to basic residues. Low complexity predominate over residues 577–597 (SRSPYSRSRSRSPGSRSSSRS). The span at 620 to 629 (SRSRSPYSRR) shows a compositional bias: basic residues. Positions 630–669 (PRYDSYEANEHERLKRDEYRREYEKRESERAKQRERQKQK) are enriched in basic and acidic residues. The region spanning 675–751 (RVIYVGKIRP…TDFELYFCGR (77 aa)) is the RRM domain. Lysine 756 and lysine 777 each carry N6-acetyllysine.

In terms of assembly, homooligomer. Interacts with MYBBP1A; inhibits MYBBP1A transcriptional activation. Interacts with PRDM16, LPIN1 and PML. Interacts (via LXXLL motif) with RORA and RORC (via AF-2 motif); activates RORA and RORC transcriptional activation. Interacts with LRPPRC. Interacts with FOXO1. Interacts with NR5A2. Post-translationally, phosphorylation by AMPK in skeletal muscle increases activation of its own promoter. Phosphorylated by CLK2. In terms of processing, heavily acetylated by KAT2A/GCN5 under conditions of high nutrients, leading to inactivation of PPARGC1A. Deacetylated by SIRT1 in low nutrients/high NAD conditions, leading to its activation. Ubiquitinated. Ubiquitination by RNF34 induces proteasomal degradation.

The protein localises to the nucleus. The protein resides in the PML body. Functionally, transcriptional coactivator for steroid receptors and nuclear receptors. Greatly increases the transcriptional activity of PPARG and thyroid hormone receptor on the uncoupling protein promoter. Can regulate key mitochondrial genes that contribute to the program of adaptive thermogenesis. Plays an essential role in metabolic reprogramming in response to dietary availability through coordination of the expression of a wide array of genes involved in glucose and fatty acid metabolism. Acts as a key regulator of gluconeogenesis: stimulates hepatic gluconeogenesis by increasing the expression of gluconeogenic enzymes, and acting together with FOXO1 to promote the fasting gluconeogenic program. Induces the expression of PERM1 in the skeletal muscle in an ESRRA-dependent manner. Also involved in the integration of the circadian rhythms and energy metabolism. Required for oscillatory expression of clock genes, such as BMAL1 and NR1D1, through the coactivation of RORA and RORC, and metabolic genes, such as PDK4 and PEPCK. This is Peroxisome proliferator-activated receptor gamma coactivator 1-alpha (Ppargc1a) from Rattus norvegicus (Rat).